A 156-amino-acid chain; its full sequence is D-aminoacyl-tRNA deacylase (156 aa).

The short motif at 142 to 143 (GP) is the Gly-cisPro motif, important for rejection of L-amino acids element.

Belongs to the DTD family. Homodimer.

The protein resides in the cytoplasm. The enzyme catalyses glycyl-tRNA(Ala) + H2O = tRNA(Ala) + glycine + H(+). It carries out the reaction a D-aminoacyl-tRNA + H2O = a tRNA + a D-alpha-amino acid + H(+). Its function is as follows. An aminoacyl-tRNA editing enzyme that deacylates mischarged D-aminoacyl-tRNAs. Also deacylates mischarged glycyl-tRNA(Ala), protecting cells against glycine mischarging by AlaRS. Acts via tRNA-based rather than protein-based catalysis; rejects L-amino acids rather than detecting D-amino acids in the active site. By recycling D-aminoacyl-tRNA to D-amino acids and free tRNA molecules, this enzyme counteracts the toxicity associated with the formation of D-aminoacyl-tRNA entities in vivo and helps enforce protein L-homochirality. The sequence is that of D-aminoacyl-tRNA deacylase from Delftia acidovorans (strain DSM 14801 / SPH-1).